Consider the following 269-residue polypeptide: Major capsid protein P2 (269 aa).

As to quaternary structure, homotrimer.

It localises to the virion. Its function is as follows. Major capsid protein. The protein is Major capsid protein P2 (II) of Pseudoalteromonas phage PM2 (Bacteriophage PM2).